A 133-amino-acid polypeptide reads, in one-letter code: Small ribosomal subunit protein uS8 (133 aa).

The protein belongs to the universal ribosomal protein uS8 family. In terms of assembly, part of the 30S ribosomal subunit. Contacts proteins S5 and S12.

One of the primary rRNA binding proteins, it binds directly to 16S rRNA central domain where it helps coordinate assembly of the platform of the 30S subunit. The chain is Small ribosomal subunit protein uS8 from Cyanothece sp. (strain PCC 7425 / ATCC 29141).